Reading from the N-terminus, the 695-residue chain is Threonine--tRNA ligase (695 aa).

Positions 1 to 66 constitute a TGS domain; that stretch reads MSAPARPAPA…DTDVEVTPVA (66 aa). The segment at 263 to 569 is catalytic; that stretch reads DHRKLGVELD…LTEHYAGAFP (307 aa). Zn(2+)-binding residues include Cys-368, His-419, and His-546.

Belongs to the class-II aminoacyl-tRNA synthetase family. As to quaternary structure, homodimer. The cofactor is Zn(2+).

It localises to the cytoplasm. It carries out the reaction tRNA(Thr) + L-threonine + ATP = L-threonyl-tRNA(Thr) + AMP + diphosphate + H(+). Its function is as follows. Catalyzes the attachment of threonine to tRNA(Thr) in a two-step reaction: L-threonine is first activated by ATP to form Thr-AMP and then transferred to the acceptor end of tRNA(Thr). Also edits incorrectly charged L-seryl-tRNA(Thr). In Mycolicibacterium gilvum (strain PYR-GCK) (Mycobacterium gilvum (strain PYR-GCK)), this protein is Threonine--tRNA ligase.